Here is a 522-residue protein sequence, read N- to C-terminus: Subtilisin-like protease 10 (522 aa).

The first 19 residues, 1–19 (MFFFKGVVAVLSFFSAVNA), serve as a signal peptide directing secretion. A propeptide spanning residues 20–117 (APFMKPNNGT…VERDQIGTSQ (98 aa)) is cleaved from the precursor. The Inhibitor I9 domain maps to 36–113 (SYIVLLKRDI…HVAHVERDQI (78 aa)). The Peptidase S8 domain maps to 127–405 (NWGLGRLSNS…KLLVNGANGT (279 aa)). Catalysis depends on charge relay system residues Asp159 and His190. N-linked (GlcNAc...) asparagine glycosylation is present at Asn251. Catalysis depends on Ser348, which acts as the Charge relay system. A compositionally biased stretch (polar residues) spans 383–397 (SASVKNPGPNTTNKL). The interval 383-515 (SASVKNPGPN…GWNRPMWWNR (133 aa)) is disordered. 2 N-linked (GlcNAc...) asparagine glycosylation sites follow: Asn392 and Asn403. Residues 432-459 (SQNPPPGQNPPPGQNPPPEQPAPSPPAN) show a composition bias toward pro residues.

It belongs to the peptidase S8 family.

Its subcellular location is the secreted. In terms of biological role, secreted subtilisin-like serine protease with keratinolytic activity that contributes to pathogenicity. The polypeptide is Subtilisin-like protease 10 (SUB10) (Trichophyton verrucosum (strain HKI 0517)).